We begin with the raw amino-acid sequence, 235 residues long: Purine nucleoside phosphorylase DeoD-type (235 aa).

An a purine D-ribonucleoside-binding site is contributed by His4. Phosphate-binding positions include Gly20, Arg24, Arg43, and 87–90 (RVGT). A purine D-ribonucleoside is bound by residues 179 to 181 (EME) and 203 to 204 (SD). Asp204 serves as the catalytic Proton donor.

It belongs to the PNP/UDP phosphorylase family. Homohexamer; trimer of homodimers.

The enzyme catalyses a purine D-ribonucleoside + phosphate = a purine nucleobase + alpha-D-ribose 1-phosphate. It catalyses the reaction a purine 2'-deoxy-D-ribonucleoside + phosphate = a purine nucleobase + 2-deoxy-alpha-D-ribose 1-phosphate. Catalyzes the reversible phosphorolytic breakdown of the N-glycosidic bond in the beta-(deoxy)ribonucleoside molecules, with the formation of the corresponding free purine bases and pentose-1-phosphate. This Brevibacillus brevis (strain 47 / JCM 6285 / NBRC 100599) protein is Purine nucleoside phosphorylase DeoD-type.